A 159-amino-acid polypeptide reads, in one-letter code: Growth arrest and DNA damage-inducible protein GADD45 gamma (159 aa).

Residues 43–86 form a homodimerization region; that stretch reads VYESAKVLNVDPDNVTFCVLAADEEDEGDIALQIHFTLIQAFCC.

Belongs to the GADD45 family. In terms of assembly, undergoes concentration-dependent homodimerization, which is required for growth inhibititory activity and enhances interaction with PCNA. Interacts with GADD45GIP1. Interacts with PCNA.

In terms of biological role, involved in the regulation of growth and apoptosis. Mediates activation of stress-responsive MTK1/MEKK4 MAPKKK. This chain is Growth arrest and DNA damage-inducible protein GADD45 gamma (Gadd45g), found in Rattus norvegicus (Rat).